A 365-amino-acid polypeptide reads, in one-letter code: 2-aminoethylphosphonate--pyruvate transaminase (365 aa).

Lys-194 is subject to N6-(pyridoxal phosphate)lysine.

The protein belongs to the class-V pyridoxal-phosphate-dependent aminotransferase family. PhnW subfamily. In terms of assembly, homodimer. Pyridoxal 5'-phosphate serves as cofactor.

The catalysed reaction is (2-aminoethyl)phosphonate + pyruvate = phosphonoacetaldehyde + L-alanine. Involved in phosphonate degradation. The protein is 2-aminoethylphosphonate--pyruvate transaminase of Bacillus cereus (strain 03BB102).